A 335-amino-acid chain; its full sequence is Methionine import ATP-binding protein MetN 2 (335 aa).

The ABC transporter domain maps to 2-242 (IEFHNVHKTY…PQHSTTKRFV (241 aa)). ATP is bound at residue 38–45 (GHSGAGKS).

The protein belongs to the ABC transporter superfamily. Methionine importer (TC 3.A.1.24) family. As to quaternary structure, the complex is composed of two ATP-binding proteins (MetN), two transmembrane proteins (MetI) and a solute-binding protein (MetQ).

Its subcellular location is the cell inner membrane. The enzyme catalyses L-methionine(out) + ATP + H2O = L-methionine(in) + ADP + phosphate + H(+). The catalysed reaction is D-methionine(out) + ATP + H2O = D-methionine(in) + ADP + phosphate + H(+). Functionally, part of the ABC transporter complex MetNIQ involved in methionine import. Responsible for energy coupling to the transport system. The sequence is that of Methionine import ATP-binding protein MetN 2 from Pseudomonas syringae pv. tomato (strain ATCC BAA-871 / DC3000).